We begin with the raw amino-acid sequence, 181 residues long: Adenine phosphoribosyltransferase (181 aa).

The protein belongs to the purine/pyrimidine phosphoribosyltransferase family. In terms of assembly, homodimer.

It localises to the cytoplasm. It catalyses the reaction AMP + diphosphate = 5-phospho-alpha-D-ribose 1-diphosphate + adenine. It functions in the pathway purine metabolism; AMP biosynthesis via salvage pathway; AMP from adenine: step 1/1. Its function is as follows. Catalyzes a salvage reaction resulting in the formation of AMP, that is energically less costly than de novo synthesis. This is Adenine phosphoribosyltransferase from Vibrio parahaemolyticus serotype O3:K6 (strain RIMD 2210633).